The sequence spans 217 residues: Cytidylate kinase (217 aa).

10–18 (GPAGAGKST) provides a ligand contact to ATP.

Belongs to the cytidylate kinase family. Type 1 subfamily.

It is found in the cytoplasm. The enzyme catalyses CMP + ATP = CDP + ADP. The catalysed reaction is dCMP + ATP = dCDP + ADP. This is Cytidylate kinase from Clostridium botulinum (strain ATCC 19397 / Type A).